We begin with the raw amino-acid sequence, 86 residues long: Small ribosomal subunit protein bS16 (86 aa).

This sequence belongs to the bacterial ribosomal protein bS16 family.

In Leptothrix cholodnii (strain ATCC 51168 / LMG 8142 / SP-6) (Leptothrix discophora (strain SP-6)), this protein is Small ribosomal subunit protein bS16.